The sequence spans 103 residues: UPF0145 protein EF_0241 (103 aa).

It belongs to the UPF0145 family.

This chain is UPF0145 protein EF_0241, found in Enterococcus faecalis (strain ATCC 700802 / V583).